The primary structure comprises 470 residues: Cysteine--tRNA ligase (470 aa).

C28 lines the Zn(2+) pocket. The 'HIGH' region signature appears at 30–40 (PTVYNYIHIGN). Zn(2+) is bound by residues C212, H237, and E241. A 'KMSKS' region motif is present at residues 271 to 275 (KMSKS). Residue K274 coordinates ATP.

The protein belongs to the class-I aminoacyl-tRNA synthetase family. In terms of assembly, monomer. It depends on Zn(2+) as a cofactor.

It is found in the cytoplasm. The catalysed reaction is tRNA(Cys) + L-cysteine + ATP = L-cysteinyl-tRNA(Cys) + AMP + diphosphate. The sequence is that of Cysteine--tRNA ligase from Pediococcus pentosaceus (strain ATCC 25745 / CCUG 21536 / LMG 10740 / 183-1w).